The following is a 256-amino-acid chain: uncharacterized protein (256 aa).

A coiled-coil region spans residues 213-243 (TMSMEAKLEAAKKTLEKFKQEAASKRAKRTK). Residues 231–256 (KQEAASKRAKRTKPSGSKTTRSTGRK) form a disordered region. Over residues 244-256 (PSGSKTTRSTGRK) the composition is skewed to polar residues.

This is an uncharacterized protein from Acanthamoeba polyphaga (Amoeba).